The following is a 57-amino-acid chain: Small ribosomal subunit protein eS27 (57 aa).

Residues Cys-10, Cys-13, Cys-29, and Cys-32 each coordinate Zn(2+). The segment at 10 to 32 (CGDCENEQVVFGKASSVVSCAVC) adopts a C4-type zinc-finger fold.

This sequence belongs to the eukaryotic ribosomal protein eS27 family. As to quaternary structure, part of the 30S ribosomal subunit. It depends on Zn(2+) as a cofactor.

This Halorubrum lacusprofundi (strain ATCC 49239 / DSM 5036 / JCM 8891 / ACAM 34) protein is Small ribosomal subunit protein eS27.